We begin with the raw amino-acid sequence, 174 residues long: UPF0664 stress-induced protein C29B12.11c (174 aa).

Residues 147–174 (HLDPLPPYHRPSSSQDQPPHYEEAVNKS) are disordered. A compositionally biased stretch (basic and acidic residues) spans 165–174 (PHYEEAVNKS).

It belongs to the UPF0664 family.

It is found in the cytoplasm. The protein resides in the nucleus. The chain is UPF0664 stress-induced protein C29B12.11c from Schizosaccharomyces pombe (strain 972 / ATCC 24843) (Fission yeast).